We begin with the raw amino-acid sequence, 956 residues long: DNA replication helicase (956 aa).

120–127 contributes to the ATP binding site; that stretch reads GTAGAGKT. The interval 658–694 is disordered; that stretch reads PINNHVDADSSQGGQSVPVSQRMEHGQEETHDIPCLS. Residues 667–678 are compositionally biased toward low complexity; sequence SSQGGQSVPVSQ. The segment covering 679 to 694 has biased composition (basic and acidic residues); it reads RMEHGQEETHDIPCLS.

It belongs to the herpesviridae helicase family. Associates with the primase and the primase-associated factor to form the helicase-primase complex.

The protein localises to the host nucleus. Its function is as follows. Component of the helicase/primase complex. Unwinds the DNA at the replication forks and generates single-stranded DNA for both leading and lagging strand synthesis. The primase synthesizes short RNA primers on the lagging strand that the polymerase elongates using dNTPs. Possesses helicase-like motifs and therefore may act as the helicase subunit of the complex. This chain is DNA replication helicase, found in Human cytomegalovirus (strain Merlin) (HHV-5).